A 65-amino-acid polypeptide reads, in one-letter code: Small ribosomal subunit protein eS31 (65 aa).

Residues Cys-36, Cys-39, Cys-55, and Cys-58 each coordinate Zn(2+). A C4-type zinc finger spans residues 36-58 (CPKCGSVMAFHREPVPRWHCGKC).

It belongs to the eukaryotic ribosomal protein eS31 family. As to quaternary structure, part of the 30S ribosomal subunit. Requires Zn(2+) as cofactor.

The polypeptide is Small ribosomal subunit protein eS31 (Pyrobaculum calidifontis (strain DSM 21063 / JCM 11548 / VA1)).